The chain runs to 417 residues: UDP-N-acetylglucosamine 1-carboxyvinyltransferase (417 aa).

22–23 (KN) is a phosphoenolpyruvate binding site. Arg92 contacts UDP-N-acetyl-alpha-D-glucosamine. Residue Cys116 is the Proton donor of the active site. Cys116 is subject to 2-(S-cysteinyl)pyruvic acid O-phosphothioketal. UDP-N-acetyl-alpha-D-glucosamine is bound by residues Asp304 and Ile326.

Belongs to the EPSP synthase family. MurA subfamily.

The protein resides in the cytoplasm. It catalyses the reaction phosphoenolpyruvate + UDP-N-acetyl-alpha-D-glucosamine = UDP-N-acetyl-3-O-(1-carboxyvinyl)-alpha-D-glucosamine + phosphate. Its pathway is cell wall biogenesis; peptidoglycan biosynthesis. Cell wall formation. Adds enolpyruvyl to UDP-N-acetylglucosamine. In Geotalea daltonii (strain DSM 22248 / JCM 15807 / FRC-32) (Geobacter daltonii), this protein is UDP-N-acetylglucosamine 1-carboxyvinyltransferase.